Here is a 110-residue protein sequence, read N- to C-terminus: V-type proton ATPase subunit G 1 (110 aa).

This sequence belongs to the V-ATPase G subunit family. As to quaternary structure, V-ATPase is a heteromultimeric enzyme composed of a peripheral catalytic V1 complex (components A to H) attached to an integral membrane V0 proton pore complex (components: a, c, c', c'' and d).

Catalytic subunit of the peripheral V1 complex of vacuolar ATPase (V-ATPase). V-ATPase is responsible for acidifying a variety of intracellular compartments in eukaryotic cells. The polypeptide is V-type proton ATPase subunit G 1 (VATG1) (Nicotiana tabacum (Common tobacco)).